A 192-amino-acid chain; its full sequence is ATP-dependent Clp protease proteolytic subunit 1 (192 aa).

Serine 92 serves as the catalytic Nucleophile. The active site involves histidine 117.

Belongs to the peptidase S14 family. Fourteen ClpP subunits assemble into 2 heptameric rings which stack back to back to give a disk-like structure with a central cavity, resembling the structure of eukaryotic proteasomes.

It is found in the cytoplasm. The catalysed reaction is Hydrolysis of proteins to small peptides in the presence of ATP and magnesium. alpha-casein is the usual test substrate. In the absence of ATP, only oligopeptides shorter than five residues are hydrolyzed (such as succinyl-Leu-Tyr-|-NHMec, and Leu-Tyr-Leu-|-Tyr-Trp, in which cleavage of the -Tyr-|-Leu- and -Tyr-|-Trp bonds also occurs).. Cleaves peptides in various proteins in a process that requires ATP hydrolysis. Has a chymotrypsin-like activity. Plays a major role in the degradation of misfolded proteins. This Chlamydia abortus (strain DSM 27085 / S26/3) (Chlamydophila abortus) protein is ATP-dependent Clp protease proteolytic subunit 1.